The chain runs to 194 residues: Dephospho-CoA kinase (194 aa).

The region spanning 4-194 (ALGLTGSIGM…HLVSKLTEGT (191 aa)) is the DPCK domain. An ATP-binding site is contributed by 12 to 17 (GMGKST).

It belongs to the CoaE family.

The protein resides in the cytoplasm. It catalyses the reaction 3'-dephospho-CoA + ATP = ADP + CoA + H(+). It participates in cofactor biosynthesis; coenzyme A biosynthesis; CoA from (R)-pantothenate: step 5/5. Its function is as follows. Catalyzes the phosphorylation of the 3'-hydroxyl group of dephosphocoenzyme A to form coenzyme A. This Jannaschia sp. (strain CCS1) protein is Dephospho-CoA kinase.